The primary structure comprises 735 residues: Coiled-coil quantitatively-enriched protein 1 (735 aa).

Positions 514–719 (AAVQYLQRRL…TLKILEQKSL (206 aa)) form a coiled coil.

As to quaternary structure, interacts (during meiosis) with pcp1. Interacts with clr3, pot1, taz1 and tpz1.

The protein resides in the nucleus. Its subcellular location is the nucleoplasm. The protein localises to the chromosome. It is found in the telomere. Functionally, component of the meiotic bouquet that facilitates meiotic nuclear reorganization of the telomeres to the centrosome. Links telomeres to the meiotic centrosome component pcp1. Essential for the formation of normal telomere clusters during meiotic prophase. Required for telomere length regulation and chromosome segregation. Required for proper positioning of nucleosomes at heterochromatic loci and for transcriptional gene silencing (TGS) function of the Snf2/Hdac-containing repressor complex (SHREC). This chain is Coiled-coil quantitatively-enriched protein 1 (ccq1), found in Schizosaccharomyces pombe (strain 972 / ATCC 24843) (Fission yeast).